We begin with the raw amino-acid sequence, 264 residues long: Mannose-specific lectin CEA (264 aa).

Positions 1–23 (MAKLLLFLLPAILGLLVPRSAVA) are cleaved as a signal peptide. 2 consecutive Bulb-type lectin domains span residues 26 to 131 (TNYL…PWVP) and 145 to 252 (NNLL…PQAK). Beta-D-mannose contacts are provided by residues 51 to 55 (QDDCN), tyrosine 59, tryptophan 63, glutamine 64, 170 to 174 (QGDCN), tyrosine 178, and 182 to 185 (YGWQ). The Carbohydrate-binding motif 1 motif lies at 51–59 (QDDCNLVLY). 2 disulfides stabilise this stretch: cysteine 54–cysteine 74 and cysteine 173–cysteine 195. The Carbohydrate-binding motif 2 signature appears at 170 to 178 (QGDCNLVLY).

Forms heterotetramer of 2 chains 1 and 2 chains 2 arranged as a dimer of chain 1 and chain 2 heterodimers.

The protein localises to the secreted. Mannose-specific lectin. Shows agglutinating activity towards erythrocytes from rabbit. Has insecticidal activity against cotton aphids and other hemipteran insects. The sequence is that of Mannose-specific lectin CEA from Colocasia esculenta (Wild taro).